Reading from the N-terminus, the 60-residue chain is Large ribosomal subunit protein bL32c (60 aa).

Belongs to the bacterial ribosomal protein bL32 family.

The protein resides in the plastid. Its subcellular location is the chloroplast. The chain is Large ribosomal subunit protein bL32c from Psilotum nudum (Whisk fern).